We begin with the raw amino-acid sequence, 117 residues long: Large ribosomal subunit protein bL20 (117 aa).

This sequence belongs to the bacterial ribosomal protein bL20 family.

Its function is as follows. Binds directly to 23S ribosomal RNA and is necessary for the in vitro assembly process of the 50S ribosomal subunit. It is not involved in the protein synthesizing functions of that subunit. The sequence is that of Large ribosomal subunit protein bL20 from Pasteurella multocida (strain Pm70).